The primary structure comprises 205 residues: Methylthioribulose-1-phosphate dehydratase (205 aa).

The Zn(2+) site is built by H96 and H98.

Belongs to the aldolase class II family. MtnB subfamily. Requires Zn(2+) as cofactor.

It carries out the reaction 5-(methylsulfanyl)-D-ribulose 1-phosphate = 5-methylsulfanyl-2,3-dioxopentyl phosphate + H2O. It participates in amino-acid biosynthesis; L-methionine biosynthesis via salvage pathway; L-methionine from S-methyl-5-thio-alpha-D-ribose 1-phosphate: step 2/6. Its function is as follows. Catalyzes the dehydration of methylthioribulose-1-phosphate (MTRu-1-P) into 2,3-diketo-5-methylthiopentyl-1-phosphate (DK-MTP-1-P). The chain is Methylthioribulose-1-phosphate dehydratase from Pseudomonas aeruginosa (strain ATCC 15692 / DSM 22644 / CIP 104116 / JCM 14847 / LMG 12228 / 1C / PRS 101 / PAO1).